The sequence spans 476 residues: Protein transport protein Sec61 subunit alpha isoform 1 (476 aa).

Residues 1–33 lie on the Cytoplasmic side of the membrane; the sequence is MAIKFLEVIKPFCVILPEIQKPERKIQFKEKVL. The helical transmembrane segment at 34 to 53 threads the bilayer; sequence WTAITLFIFLVCCQIPLFGI. Residues 54 to 76 lie on the Lumenal side of the membrane; the sequence is MSSDSADPFYWMRVILASNRGTL. The helical transmembrane segment at 77 to 96 threads the bilayer; the sequence is MELGISPIVTSGLIMQLLAG. The Cytoplasmic segment spans residues 97–117; that stretch reads AKIIEVGDTPKDRALFNGAQK. The chain crosses the membrane as a helical span at residues 118-138; it reads LFGMIITIGQSIVYVMTGMYG. Over 139–144 the chain is Lumenal; sequence DPSEMG. Residues 145–165 traverse the membrane as a helical segment; the sequence is AGICLLITIQLFVAGLIVLLL. Over 166-172 the chain is Cytoplasmic; sequence DELLQKG. A helical membrane pass occupies residues 173–193; it reads YGLGSGISLFIATNICETIVW. Residues 194 to 240 lie on the Lumenal side of the membrane; it reads KAFSPTTVNTGRGMEFEGAIIALFHLLATRTDKVRALREAFYRQNLP. A helical transmembrane segment spans residues 241-261; the sequence is NLMNLIATIFVFAVVIYFQGF. The Cytoplasmic segment spans residues 262–288; sequence RVDLPIKSARYRGQYNTYPIKLFYTSN. A helical transmembrane segment spans residues 289-309; it reads IPIILQSALVSNLYVISQMLS. At 310–354 the chain is on the lumenal side; the sequence is ARFSGNLLVSLLGTWSDTSSGGPARAYPVGGLCYYLSPPESFGSV. A helical membrane pass occupies residues 355-375; the sequence is LEDPVHAVVYIVFMLGSCAFF. Residues 376 to 420 lie on the Cytoplasmic side of the membrane; it reads SKTWIEVSGSSAKDVAKQLKEQQMVMRGHRETSMVHELNRYIPTA. The helical transmembrane segment at 421–441 threads the bilayer; it reads AAFGGLCIGALSVLADFLGAI. Residues 442–445 are Lumenal-facing; the sequence is GSGT. The helical transmembrane segment at 446 to 462 threads the bilayer; sequence GILLAVTIIYQYFEIFV. Over 463-476 the chain is Cytoplasmic; it reads KEQSEVGSMGALLF.

It belongs to the SecY/SEC61-alpha family. In terms of assembly, the SEC61 channel-forming translocon complex consists of channel-forming core components SEC61A1, SEC61B and SEC61G and different auxiliary components such as SEC62 and SEC63. The SEC61 channel associates with the multi-pass translocon (MPT) complex. As to expression, expressed in proximal and distal tubules in kidney (at protein level).

The protein localises to the endoplasmic reticulum membrane. Its function is as follows. Component of SEC61 channel-forming translocon complex that mediates transport of signal peptide-containing precursor polypeptides across the endoplasmic reticulum (ER). Forms a ribosome receptor and a gated pore in the ER membrane, both functions required for cotranslational translocation of nascent polypeptides. May cooperate with auxiliary protein SEC62, SEC63 and HSPA5/BiP to enable post-translational transport of small presecretory proteins. The SEC61 channel is also involved in ER membrane insertion of transmembrane proteins: it mediates membrane insertion of the first few transmembrane segments of proteins, while insertion of subsequent transmembrane regions of multi-pass membrane proteins is mediated by the multi-pass translocon (MPT) complex. The SEC61 channel cooperates with the translocating protein TRAM1 to import nascent proteins into the ER. Controls the passive efflux of calcium ions from the ER lumen to the cytosol through SEC61 channel, contributing to the maintenance of cellular calcium homeostasis. Plays a critical role in nephrogenesis, specifically at pronephros stage. The sequence is that of Protein transport protein Sec61 subunit alpha isoform 1 (SEC61A1) from Homo sapiens (Human).